The chain runs to 293 residues: 3-hydroxybutyryl-CoA dehydrogenase (293 aa).

The protein belongs to the 3-hydroxyacyl-CoA dehydrogenase family.

The enzyme catalyses (3S)-3-hydroxybutanoyl-CoA + NADP(+) = acetoacetyl-CoA + NADPH + H(+). It participates in lipid metabolism; butanoate metabolism. The protein is 3-hydroxybutyryl-CoA dehydrogenase (hbdA) of Bradyrhizobium diazoefficiens (strain JCM 10833 / BCRC 13528 / IAM 13628 / NBRC 14792 / USDA 110).